The following is a 626-amino-acid chain: ATP-dependent RNA helicase dbp-8 (626 aa).

Over residues 1-25 (MPSATAAKAKKANANANLKSKVNKA) the composition is skewed to low complexity. The segment at 1 to 183 (MPSATAAKAK…ATPALPVPEP (183 aa)) is disordered. Acidic residues predominate over residues 40-98 (DESDFGSELDVEDESAASDEEDEDEDEDEHDLEEGVSDEGEGVSDEEEGVSDEDEDEEN). Basic and acidic residues predominate over residues 161–173 (KQAEAPKTEKTEE). The short motif at 195 to 223 (TTFDALNVRPWLVQSLANMAIKRPTGIQK) is the Q motif element. Residues 226 to 406 (IPEILKGRDC…ERPPIPGRAP (181 aa)) form the Helicase ATP-binding domain. ATP is bound at residue 239–246 (SRTGSGKT). A DEAD box motif is present at residues 348-351 (DEAD). The Helicase C-terminal domain occupies 438 to 589 (YLHMFLLTPQ…GVNLETRVIR (152 aa)).

Belongs to the DEAD box helicase family. DDX49/DBP8 subfamily.

The protein resides in the nucleus. Its subcellular location is the nucleolus. It catalyses the reaction ATP + H2O = ADP + phosphate + H(+). ATP-binding RNA helicase involved in 40S ribosomal subunit biogenesis and is required for the normal formation of 18S rRNAs through pre-rRNA processing at A0, A1 and A2 sites. Required for vegetative growth. The chain is ATP-dependent RNA helicase dbp-8 (dbp-8) from Neurospora crassa (strain ATCC 24698 / 74-OR23-1A / CBS 708.71 / DSM 1257 / FGSC 987).